A 403-amino-acid polypeptide reads, in one-letter code: 4-hydroxy-3-methylbut-2-enyl diphosphate reductase (403 aa).

[4Fe-4S] cluster is bound at residue C66. H96 serves as a coordination point for (2E)-4-hydroxy-3-methylbut-2-enyl diphosphate. H96 serves as a coordination point for dimethylallyl diphosphate. Residue H96 participates in isopentenyl diphosphate binding. A [4Fe-4S] cluster-binding site is contributed by C157. H185 contributes to the (2E)-4-hydroxy-3-methylbut-2-enyl diphosphate binding site. Position 185 (H185) interacts with dimethylallyl diphosphate. H185 is an isopentenyl diphosphate binding site. E187 functions as the Proton donor in the catalytic mechanism. (2E)-4-hydroxy-3-methylbut-2-enyl diphosphate is bound at residue T250. C288 is a [4Fe-4S] cluster binding site. (2E)-4-hydroxy-3-methylbut-2-enyl diphosphate is bound by residues S317, S318, N319, and S379. Dimethylallyl diphosphate contacts are provided by S317, S318, N319, and S379. The isopentenyl diphosphate site is built by S317, S318, N319, and S379.

The protein belongs to the IspH family. It depends on [4Fe-4S] cluster as a cofactor.

It catalyses the reaction isopentenyl diphosphate + 2 oxidized [2Fe-2S]-[ferredoxin] + H2O = (2E)-4-hydroxy-3-methylbut-2-enyl diphosphate + 2 reduced [2Fe-2S]-[ferredoxin] + 2 H(+). The enzyme catalyses dimethylallyl diphosphate + 2 oxidized [2Fe-2S]-[ferredoxin] + H2O = (2E)-4-hydroxy-3-methylbut-2-enyl diphosphate + 2 reduced [2Fe-2S]-[ferredoxin] + 2 H(+). It functions in the pathway isoprenoid biosynthesis; dimethylallyl diphosphate biosynthesis; dimethylallyl diphosphate from (2E)-4-hydroxy-3-methylbutenyl diphosphate: step 1/1. It participates in isoprenoid biosynthesis; isopentenyl diphosphate biosynthesis via DXP pathway; isopentenyl diphosphate from 1-deoxy-D-xylulose 5-phosphate: step 6/6. Catalyzes the conversion of 1-hydroxy-2-methyl-2-(E)-butenyl 4-diphosphate (HMBPP) into a mixture of isopentenyl diphosphate (IPP) and dimethylallyl diphosphate (DMAPP). Acts in the terminal step of the DOXP/MEP pathway for isoprenoid precursor biosynthesis. This chain is 4-hydroxy-3-methylbut-2-enyl diphosphate reductase, found in Picosynechococcus sp. (strain ATCC 27264 / PCC 7002 / PR-6) (Agmenellum quadruplicatum).